A 353-amino-acid chain; its full sequence is Photosystem II D2 protein (353 aa).

Thr2 bears the N-acetylthreonine mark. Thr2 carries the post-translational modification Phosphothreonine. Residues 41 to 61 (CAYFALGGWFTGTTFVTSWYT) traverse the membrane as a helical segment. His118 is a chlorophyll a binding site. A helical transmembrane segment spans residues 125–141 (GFMLRQFELARSVQLRP). Pheophytin a contacts are provided by Gln130 and Asn143. A helical transmembrane segment spans residues 153–166 (VFVSVFLIYPLGQS). Chlorophyll a is bound at residue His198. Residues 208–228 (AALLCAIHGATVENTLFEDGD) traverse the membrane as a helical segment. A plastoquinone-binding residues include His215 and Phe262. His215 contributes to the Fe cation binding site. His269 contributes to the Fe cation binding site. The helical transmembrane segment at 279 to 295 (GSWMSAIGVVGLALNLR) threads the bilayer.

Belongs to the reaction center PufL/M/PsbA/D family. As to quaternary structure, PSII is composed of 1 copy each of membrane proteins PsbA, PsbB, PsbC, PsbD, PsbE, PsbF, PsbH, PsbI, PsbJ, PsbK, PsbL, PsbM, PsbT, PsbX, PsbY, PsbZ, Psb30/Ycf12, at least 3 peripheral proteins of the oxygen-evolving complex and a large number of cofactors. It forms dimeric complexes. The D1/D2 heterodimer binds P680, chlorophylls that are the primary electron donor of PSII, and subsequent electron acceptors. It shares a non-heme iron and each subunit binds pheophytin, quinone, additional chlorophylls, carotenoids and lipids. There is also a Cl(-1) ion associated with D1 and D2, which is required for oxygen evolution. The PSII complex binds additional chlorophylls, carotenoids and specific lipids. serves as cofactor.

The protein localises to the plastid. The protein resides in the chloroplast thylakoid membrane. The enzyme catalyses 2 a plastoquinone + 4 hnu + 2 H2O = 2 a plastoquinol + O2. In terms of biological role, photosystem II (PSII) is a light-driven water:plastoquinone oxidoreductase that uses light energy to abstract electrons from H(2)O, generating O(2) and a proton gradient subsequently used for ATP formation. It consists of a core antenna complex that captures photons, and an electron transfer chain that converts photonic excitation into a charge separation. The D1/D2 (PsbA/PsbD) reaction center heterodimer binds P680, the primary electron donor of PSII as well as several subsequent electron acceptors. D2 is needed for assembly of a stable PSII complex. The sequence is that of Photosystem II D2 protein from Pinus koraiensis (Korean pine).